We begin with the raw amino-acid sequence, 203 residues long: Small ribosomal subunit protein uS4 (203 aa).

The region spanning 93–154 (RRFDNVVFRA…KSKNMDAVTE (62 aa)) is the S4 RNA-binding domain.

Belongs to the universal ribosomal protein uS4 family. Part of the 30S ribosomal subunit. Contacts protein S5. The interaction surface between S4 and S5 is involved in control of translational fidelity.

In terms of biological role, one of the primary rRNA binding proteins, it binds directly to 16S rRNA where it nucleates assembly of the body of the 30S subunit. Its function is as follows. With S5 and S12 plays an important role in translational accuracy. This chain is Small ribosomal subunit protein uS4, found in Prosthecochloris aestuarii (strain DSM 271 / SK 413).